A 565-amino-acid polypeptide reads, in one-letter code: Salicyl-AMP ligase / salicyl-S-ArCP synthetase (565 aa).

ATP contacts are provided by G214, G330, V352, D436, R451, and K542.

Belongs to the ATP-dependent AMP-binding enzyme family.

It carries out the reaction salicylate + ATP + H(+) = 2-hydroxybenzoyl-5'-AMP + diphosphate. The enzyme catalyses 2-hydroxybenzoyl-5'-AMP + holo-[ACP] = salicyl-[ACP] + AMP + H(+). It functions in the pathway siderophore biosynthesis; mycobactin biosynthesis. With respect to regulation, inhibited by salicyl-AMS, an acyl-AMP analog. Also inhibited by 5'-O-[(N-acyl)sulfamoyl]adenosines. Functionally, involved in the initial steps of the mycobactin biosynthetic pathway. Catalyzes the salicylation of the aryl carrier protein (ArCP) domain of MbtB through a two-step reaction. The first step is the ATP-dependent adenylation of salicylate to generate a salicyl-AMP intermediate. The second step is the transfer of this activated salicylate to MbtB to form a salicyl-ArCP domain thioester. This Mycobacterium tuberculosis (strain ATCC 25618 / H37Rv) protein is Salicyl-AMP ligase / salicyl-S-ArCP synthetase.